A 255-amino-acid chain; its full sequence is Small ribosomal subunit protein uS2 (255 aa).

Positions 226–255 (QGVSNEEVAAEQNIDLDEKEKSEETEATEE) are disordered.

The protein belongs to the universal ribosomal protein uS2 family.

This is Small ribosomal subunit protein uS2 from Staphylococcus aureus (strain JH1).